A 369-amino-acid chain; its full sequence is Cellular tumor antigen p53 (369 aa).

The segment at 1-28 (MAESQEFAELWERNLISTQEAGTCWELI) is transcription activation (acidic). A DNA-binding region spans residues 66 to 256 (DYPGEHGFKL…KTEESNFRKD (191 aa)). Positions 140, 143, 202, and 206 each coordinate Zn(2+). Residues 237–244 (RVCACPGR) form an interaction with DNA region. The span at 246–263 (RKTEESNFRKDQETKTLD) shows a compositional bias: basic and acidic residues. Disordered stretches follow at residues 246–296 (RKTE…SGSS) and 318–369 (NDSL…SDSD). The span at 269–281 (NKRSLTKDSTSSV) shows a compositional bias: polar residues. Residues 270-289 (KRSLTKDSTSSVPRPEGSKK) carry the Bipartite nuclear localization signal motif. Residues 298–329 (EEIYTLQVRGKERYEMLKKINDSLELSDVVPP) form an oligomerization region. Positions 312 to 323 (EMLKKINDSLEL) match the Nuclear export signal motif. The interval 342-365 (KGKKKDGQTPEPKRGKKLMVKDEK) is basic (repression of DNA-binding). Residues 346–369 (KDGQTPEPKRGKKLMVKDEKSDSD) show a composition bias toward basic and acidic residues.

This sequence belongs to the p53 family. As to quaternary structure, binds DNA as a homotetramer. Requires Zn(2+) as cofactor.

The protein resides in the cytoplasm. Its subcellular location is the nucleus. In terms of biological role, multifunctional transcription factor that induces cell cycle arrest, DNA repair or apoptosis upon binding to its target DNA sequence. Acts as a tumor suppressor in many tumor types; induces growth arrest or apoptosis depending on the physiological circumstances and cell type. Negatively regulates cell division by controlling expression of a set of genes required for this process. One of the activated genes is an inhibitor of cyclin-dependent kinases. Apoptosis induction seems to be mediated either by stimulation of BAX and FAS antigen expression, or by repression of Bcl-2 expression. The polypeptide is Cellular tumor antigen p53 (tp53) (Barbus barbus (Barbel)).